The chain runs to 201 residues: ADP-ribosylation factor-related protein 1 (201 aa).

Met-1 carries the N-acetylmethionine modification. GTP contacts are provided by residues 24 to 31, 75 to 79, and 134 to 137; these read GLDNAGKT, DLGGQ, and NKQD.

This sequence belongs to the small GTPase superfamily. Arf family. Interacts with SYS1.

It localises to the golgi apparatus. Its subcellular location is the trans-Golgi network. Functionally, trans-Golgi-associated GTPase that regulates protein sorting. Controls the targeting of ARL1 and its effector to the trans-Golgi. Required for the lipidation of chylomicrons in the intestine and required for VLDL lipidation in the liver. The protein is ADP-ribosylation factor-related protein 1 (ARFRP1) of Bos taurus (Bovine).